Consider the following 71-residue polypeptide: Small ribosomal subunit protein bS21 (71 aa).

The protein belongs to the bacterial ribosomal protein bS21 family.

This Acidithiobacillus ferrooxidans (strain ATCC 23270 / DSM 14882 / CIP 104768 / NCIMB 8455) (Ferrobacillus ferrooxidans (strain ATCC 23270)) protein is Small ribosomal subunit protein bS21.